The sequence spans 578 residues: Polymerase acidic protein (578 aa).

As to quaternary structure, the RNA polymerase is composed of three subunits: PB1, PB2 and PA. Post-translationally, phosphorylated on serines and threonines by host kinases.

Its function is as follows. Implicated in endonuclease cleavage of capped RNA primers. Displays an elongation factor activity in viral RNA synthesis. Dispensable for viral transcription, but not replication. This is Polymerase acidic protein from Infectious salmon anemia virus (isolate Atlantic salmon/Norway/810/9/99) (ISAV).